A 637-amino-acid chain; its full sequence is Biosynthetic arginine decarboxylase (637 aa).

The residue at position 101 (Lys-101) is an N6-(pyridoxal phosphate)lysine. 286–296 (FDVGGGLAVDY) lines the substrate pocket.

Belongs to the Orn/Lys/Arg decarboxylase class-II family. SpeA subfamily. Requires Mg(2+) as cofactor. Pyridoxal 5'-phosphate serves as cofactor.

It catalyses the reaction L-arginine + H(+) = agmatine + CO2. It functions in the pathway amine and polyamine biosynthesis; agmatine biosynthesis; agmatine from L-arginine: step 1/1. Functionally, catalyzes the biosynthesis of agmatine from arginine. The sequence is that of Biosynthetic arginine decarboxylase from Shewanella baltica (strain OS195).